The chain runs to 97 residues: Mapk-regulated corepressor-interacting protein 1 (97 aa).

The segment at 1–30 is disordered; sequence MTSSPVSRVVYNGKRTSSPRSPPSSSEIFT. A phosphoserine mark is found at S21 and S24. T30 carries the post-translational modification Phosphothreonine. Y41 carries the post-translational modification Phosphotyrosine. Position 79 is an N6-acetyllysine (K79). A PXDLS motif motif is present at residues 80 to 84; that stretch reads PIDLS.

The protein belongs to the MCRIP family. In terms of assembly, interacts (unphosphorylated form, via the PXDLS motif) with CTBP1, competitively inhibiting CTBP-ZEB1 interaction. Interacts with CTBP2. Interacts with MCRIP2. Interacts with DDX6. Post-translationally, phosphorylation by MAPK3/1 (ERK1/2) regulates MCRIP1 binding to CTBP(s).

It localises to the nucleus. Its subcellular location is the cytoplasm. It is found in the stress granule. Functionally, the phosphorylation status of MCRIP1 functions as a molecular switch to regulate epithelial-mesenchymal transition. Unphosphorylated MCRIP1 binds to and inhibits the transcriptional corepressor CTBP(s). When phosphorylated by MAPK/ERK, MCRIP1 releases CTBP(s) resulting in transcriptional silencing of the E-cadherin gene and induction of epithelial-mesenchymal transition. This chain is Mapk-regulated corepressor-interacting protein 1, found in Homo sapiens (Human).